Here is a 569-residue protein sequence, read N- to C-terminus: Probable pyruvate decarboxylase Pdc101 (569 aa).

2 residues coordinate substrate: Asp-33 and His-120. At Ser-233 the chain carries Phosphoserine. Positions 396–478 (DSWFNGLQMK…FLLNNRGYTI (83 aa)) are thiamine pyrophosphate binding. 3 residues coordinate Mg(2+): Asp-446, Asn-473, and Gly-475. Residue Glu-479 coordinates substrate. Thr-521 is subject to Phosphothreonine. Phosphoserine is present on Ser-522.

It belongs to the TPP enzyme family. Homotetramer. A metal cation serves as cofactor. Requires thiamine diphosphate as cofactor.

The enzyme catalyses a 2-oxocarboxylate + H(+) = an aldehyde + CO2. In Schizosaccharomyces pombe (strain 972 / ATCC 24843) (Fission yeast), this protein is Probable pyruvate decarboxylase Pdc101 (pdc101).